We begin with the raw amino-acid sequence, 146 residues long: NADH-quinone oxidoreductase subunit A (146 aa).

The next 3 membrane-spanning stretches (helical) occupy residues 16–36 (FAIFLIVAIGLCCLMLIGGWF), 68–88 (FYLVAMFFVIFDVEALYLFAW), and 98–118 (VGFVEAAIFILVLLAGLVYLV).

The protein belongs to the complex I subunit 3 family. NDH-1 is composed of 13 different subunits. Subunits NuoA, H, J, K, L, M, N constitute the membrane sector of the complex.

The protein localises to the cell inner membrane. It carries out the reaction a quinone + NADH + 5 H(+)(in) = a quinol + NAD(+) + 4 H(+)(out). In terms of biological role, NDH-1 shuttles electrons from NADH, via FMN and iron-sulfur (Fe-S) centers, to quinones in the respiratory chain. The immediate electron acceptor for the enzyme in this species is believed to be ubiquinone. Couples the redox reaction to proton translocation (for every two electrons transferred, four hydrogen ions are translocated across the cytoplasmic membrane), and thus conserves the redox energy in a proton gradient. The chain is NADH-quinone oxidoreductase subunit A from Enterobacter sp. (strain 638).